The following is an 803-amino-acid chain: Leucine--tRNA ligase (803 aa).

A 'HIGH' region motif is present at residues 40-51 (PYPSGQGLHVGH). Residues 575 to 579 (KMSKS) carry the 'KMSKS' region motif. Lysine 578 provides a ligand contact to ATP.

It belongs to the class-I aminoacyl-tRNA synthetase family.

It is found in the cytoplasm. The enzyme catalyses tRNA(Leu) + L-leucine + ATP = L-leucyl-tRNA(Leu) + AMP + diphosphate. This Lacticaseibacillus paracasei (strain ATCC 334 / BCRC 17002 / CCUG 31169 / CIP 107868 / KCTC 3260 / NRRL B-441) (Lactobacillus paracasei) protein is Leucine--tRNA ligase.